A 775-amino-acid chain; its full sequence is 5-methyltetrahydropteroyltriglutamate--homocysteine methyltransferase (775 aa).

5-methyltetrahydropteroyltri-L-glutamate is bound by residues 16–19 and K115; that span reads REMK. L-homocysteine contacts are provided by residues 435–437 and E488; that span reads IGS. L-methionine contacts are provided by residues 435 to 437 and E488; that span reads IGS. 5-methyltetrahydropteroyltri-L-glutamate-binding positions include 519–520 and W565; that span reads RC. D603 contacts L-homocysteine. D603 provides a ligand contact to L-methionine. E609 serves as a coordination point for 5-methyltetrahydropteroyltri-L-glutamate. Zn(2+)-binding residues include H645, C647, and E669. H698 (proton donor) is an active-site residue. C730 lines the Zn(2+) pocket.

It belongs to the vitamin-B12 independent methionine synthase family. It depends on Zn(2+) as a cofactor.

The enzyme catalyses 5-methyltetrahydropteroyltri-L-glutamate + L-homocysteine = tetrahydropteroyltri-L-glutamate + L-methionine. The protein operates within amino-acid biosynthesis; L-methionine biosynthesis via de novo pathway; L-methionine from L-homocysteine (MetE route): step 1/1. Functionally, catalyzes the transfer of a methyl group from 5-methyltetrahydrofolate to homocysteine resulting in methionine formation. This Coxiella burnetii (strain RSA 331 / Henzerling II) protein is 5-methyltetrahydropteroyltriglutamate--homocysteine methyltransferase.